Here is a 324-residue protein sequence, read N- to C-terminus: Beta-ketoacyl-[acyl-carrier-protein] synthase III (324 aa).

Residues cysteine 112 and histidine 249 contribute to the active site. The segment at 250-254 (QANRR) is ACP-binding. The active site involves asparagine 279.

Belongs to the thiolase-like superfamily. FabH family. In terms of assembly, homodimer.

The protein localises to the cytoplasm. The catalysed reaction is malonyl-[ACP] + acetyl-CoA + H(+) = 3-oxobutanoyl-[ACP] + CO2 + CoA. It functions in the pathway lipid metabolism; fatty acid biosynthesis. Its function is as follows. Catalyzes the condensation reaction of fatty acid synthesis by the addition to an acyl acceptor of two carbons from malonyl-ACP. Catalyzes the first condensation reaction which initiates fatty acid synthesis and may therefore play a role in governing the total rate of fatty acid production. Possesses both acetoacetyl-ACP synthase and acetyl transacylase activities. Its substrate specificity determines the biosynthesis of branched-chain and/or straight-chain of fatty acids. This Streptococcus pyogenes serotype M4 (strain MGAS10750) protein is Beta-ketoacyl-[acyl-carrier-protein] synthase III.